The primary structure comprises 508 residues: Photosystem II CP47 reaction center protein (508 aa).

A run of 6 helical transmembrane segments spans residues 21 to 36, 101 to 115, 140 to 156, 203 to 218, 237 to 252, and 457 to 472; these read AVHI…WAGS, IVFS…IWHW, GIHL…FGAF, IAAG…FHLS, VLSS…AFVV, and SFAL…HGAR.

This sequence belongs to the PsbB/PsbC family. PsbB subfamily. In terms of assembly, PSII is composed of 1 copy each of membrane proteins PsbA, PsbB, PsbC, PsbD, PsbE, PsbF, PsbH, PsbI, PsbJ, PsbK, PsbL, PsbM, PsbT, PsbX, PsbY, PsbZ, Psb30/Ycf12, at least 3 peripheral proteins of the oxygen-evolving complex and a large number of cofactors. It forms dimeric complexes. Requires Binds multiple chlorophylls. PSII binds additional chlorophylls, carotenoids and specific lipids. as cofactor.

It localises to the plastid. The protein resides in the chloroplast thylakoid membrane. In terms of biological role, one of the components of the core complex of photosystem II (PSII). It binds chlorophyll and helps catalyze the primary light-induced photochemical processes of PSII. PSII is a light-driven water:plastoquinone oxidoreductase, using light energy to abstract electrons from H(2)O, generating O(2) and a proton gradient subsequently used for ATP formation. In Daucus carota (Wild carrot), this protein is Photosystem II CP47 reaction center protein.